Reading from the N-terminus, the 362-residue chain is Glutamate 5-kinase (362 aa).

Lys-3 is a binding site for ATP. Substrate-binding residues include Ser-43, Asp-128, and Asn-140. ATP contacts are provided by residues 160–161 and 202–208; these read TD and TGGMRTK. Residues 267-348 form the PUA domain; the sequence is AGAILIDDGA…REIENVLGYS (82 aa).

The protein belongs to the glutamate 5-kinase family.

The protein localises to the cytoplasm. It catalyses the reaction L-glutamate + ATP = L-glutamyl 5-phosphate + ADP. It functions in the pathway amino-acid biosynthesis; L-proline biosynthesis; L-glutamate 5-semialdehyde from L-glutamate: step 1/2. In terms of biological role, catalyzes the transfer of a phosphate group to glutamate to form L-glutamate 5-phosphate. The protein is Glutamate 5-kinase of Xanthomonas euvesicatoria pv. vesicatoria (strain 85-10) (Xanthomonas campestris pv. vesicatoria).